The following is a 579-amino-acid chain: SHC-transforming protein 1 (579 aa).

N-acetylmethionine is present on M1. Residues 1–137 are disordered; the sequence is MDLLPPKPKY…QLGGEEWTRH (137 aa). Low complexity predominate over residues 16–44; that stretch reads ESLSSLEEGASGSTPPEELPSPSASSLGP. Phosphoserine is present on residues S36 and S139. The residue at position 154 (K154) is an N6-acetyllysine. One can recognise a PID domain in the interval 156 to 339; the sequence is MGPGVSYLVR…AGFDGSAWDE (184 aa). The tract at residues 337 to 357 is disordered; that stretch reads WDEEEEEPPDHQYYNDFPGKE. Residues 340-483 form a CH1 region; the sequence is EEEEPPDHQY…SMAEQLQGEP (144 aa). Phosphotyrosine occurs at positions 349, 350, and 423. Residues 432–451 form a disordered region; sequence ARQAGGGAGPPNPSLNGSAP. S449 carries the post-translational modification Phosphoserine. The 92-residue stretch at 484–575 folds into the SH2 domain; that stretch reads WFHGKLSRRE…GSELCLQQPV (92 aa).

In terms of assembly, interacts with CPNE3; this interaction may mediate the binding of CPNE3 with ERBB2. Interacts with the NPXY motif of tyrosine-phosphorylated IGF1R and INSR in vitro via the PID domain. Once activated, binds to GRB2. Interacts with tyrosine-phosphorylated DDR2 and CD3T. Interacts with the N-terminal region of APS. Interacts with GRB7 and KIT. Interacts with PTK2/FAK1. Interacts with phosphorylated LRP1 and IRS4. Interacts with FLT4 (tyrosine-phosphorylated). Interacts with PDGFRB (tyrosine-phosphorylated). Interacts with ERBB4. Interacts with TEK/TIE2 (tyrosine-phosphorylated). Interacts with ALK, GAB2, TRIM31, INPP5D/SHIP1 and INPPL1/SHIP2. Interacts with PTPN6/SHP (tyrosine phosphorylated). Identified in a complex containing FGFR4, NCAM1, CDH2, PLCG1, FRS2, SRC, SHC1, GAP43 and CTTN. Interacts with EPHB1 and GRB2; activates the MAPK/ERK cascade to regulate cell migration. Interacts with the Trk receptors NTRK1, NTRK2 and NTRK3; in a phosphotyrosine-dependent manner. Interacts with CEACAM1; this interaction is CEACAM1-phosphorylation-dependent and mediates interaction with EGFR or INSR resulting in decrease coupling of SHC1 to the MAPK3/ERK1-MAPK1/ERK2 pathway. Interacts (via PID domain) with PEAK1 (when phosphorylated at 'Tyr-1177'). Found in a complex with PPP1CA, PPP1CC, SHC1 and PEAK1. Phosphorylated in response to FLT4 signaling. Tyrosine phosphorylated by ligand-activated PDGFRB. May be tyrosine phosphorylated by activated PTK2/FAK1. Tyrosine phosphorylated by TEK/TIE2. Tyrosine phosphorylated by activated PTK2B/PYK2. Dephosphorylation by PTPN2 may regulate interaction with GRB2. Phosphorylated by activated epidermal growth factor receptor. Phosphorylated in response to KIT signaling. Isoform p47Shc and isoform p52Shc are phosphorylated on tyrosine residues of the Pro-rich domain. Isoform p66Shc is phosphorylated on Ser-36 by PRKCB upon treatment with insulin, hydrogen peroxide or irradiation with ultraviolet light. FLT3 signaling promotes tyrosine phosphorylation of isoform p47Shc and isoform p52Shc. Also tyrosine phosphorylated by ligand-activated ALK. As to expression, widely expressed. Expressed in neural stem cells but absent in mature neurons.

The protein localises to the cytoplasm. It is found in the cell junction. It localises to the focal adhesion. Its subcellular location is the mitochondrion matrix. The protein resides in the mitochondrion. Functionally, signaling adapter that couples activated growth factor receptors to signaling pathways. Participates in signaling downstream of the angiopoietin receptor TEK/TIE2, and plays a role in the regulation of endothelial cell migration and sprouting angiogenesis. Participates in a signaling cascade initiated by activated KIT and KITLG/SCF. Isoform p47Shc and isoform p52Shc, once phosphorylated, couple activated receptor kinases to Ras via the recruitment of the GRB2/SOS complex and are implicated in the cytoplasmic propagation of mitogenic signals. Isoform p47Shc and isoform p52 may thus function as initiators of the Ras signaling cascade in various non-neuronal systems. Isoform p66Shc does not mediate Ras activation, but is involved in signal transduction pathways that regulate the cellular response to oxidative stress and life span. Isoform p66Shc acts as a downstream target of the tumor suppressor p53 and is indispensable for the ability of stress-activated p53 to induce elevation of intracellular oxidants, cytochrome c release and apoptosis. The expression of isoform p66Shc has been correlated with life span. This is SHC-transforming protein 1 (Shc1) from Mus musculus (Mouse).